Consider the following 313-residue polypeptide: Beta-ribofuranosylphenol 5'-phosphate synthase (313 aa).

It belongs to the beta-RFA-P synthase family. As to quaternary structure, homodimer.

It catalyses the reaction 5-phospho-alpha-D-ribose 1-diphosphate + 4-hydroxybenzoate + H(+) = 4-(beta-D-ribofuranosyl)phenol 5'-phosphate + CO2 + diphosphate. The enzyme catalyses 4-aminobenzoate + 5-phospho-alpha-D-ribose 1-diphosphate + H(+) = 4-(beta-D-ribofuranosyl)aminobenzene 5'-phosphate + CO2 + diphosphate. It participates in cofactor biosynthesis; 5,6,7,8-tetrahydromethanopterin biosynthesis. Functionally, catalyzes the condensation of 4-hydroxybenzoate (HB) with 5-phospho-alpha-D-ribose 1-diphosphate (PRPP) to produce beta-ribofuranosylphenol 5'-phosphate (beta-RFH-P). Also catalyzes the condensation of 4-aminobenzoate (pABA) with PRPP to produce beta-ribofuranosylaminobenzene 5'-phosphate (beta-RFA-P). The protein is Beta-ribofuranosylphenol 5'-phosphate synthase of Archaeoglobus fulgidus (strain ATCC 49558 / DSM 4304 / JCM 9628 / NBRC 100126 / VC-16).